The primary structure comprises 662 residues: MKKLTFLLLCVLCTLSLQAQKQFTLASPDGNLKTTITIGDRLTYDITCNGRQILTPSPISMTLDNGTVWGENAKLSGTSRKSVDEMIPSPFYRASELRNHYNGLTLRFKKDWNVEFRAYNDGIAYRFVNQGKKPFRVVTEVSDYCFPSDMTASVPYVKSGKDGDYNSQFFNSFENTYTTDKLSKLNKQRLMFLPLVVDAGDGVKVCITESDLENYPGLYLSASEGANRLSSMHAPYPKRTVQGGHNQLQMLVKEHEDYIAKVDKPRNFPWRIAVVTTTDKDLAATNLSYLLGAPSRMSDLSWIKPGKVAWDWWNDWNLDGVDFVTGVNNPTYKAYIDFASANGIEYVILDEGWAVNLQADLMQVVKEIDLKELVDYAASKNVGIILWAGYHAFERDMENVCRHYAEMGVKGFKVDFMDRDDQEMTAFNYRAAEMCAKYKLILDLHGTHKPAGLNRTYPNVLNFEGVNGLEQMKWSSPSVDQVKYDVMIPFIRQVSGPMDYTQGAMRNASKGNYYPCYSEPMSQGTRCRQLALYVVFESPFNMLCDTPSNYMREPESTAFIAEIPTVWDESIVLDGKMGEYIVTARRKGDVWYVGGITDWSARDIEVDCSFLGDKSYHATLFKDGVNAHRAGRDYKCESFPIKKDGKLKVHLAPGGGFALKIK.

A signal peptide spans 1–19 (MKKLTFLLLCVLCTLSLQA). E174 is a Ca(2+) binding site. Catalysis depends on D415, which acts as the Nucleophile. Residues E464 and E470 each contribute to the Ca(2+) site. E470 serves as the catalytic Proton donor/acceptor.

The protein belongs to the glycosyl hydrolase 97 family. As to quaternary structure, monomer. Ca(2+) serves as cofactor.

It carries out the reaction Hydrolysis of terminal, non-reducing alpha-D-galactose residues in alpha-D-galactosides, including galactose oligosaccharides, galactomannans and galactolipids.. Inhibited by EDTA in vitro. Functionally, galactosidase that is able to hydrolyze the alpha-1,6 disaccharide melibiose and the synthetic p-nitrophenyl alpha-galactoside substrate (pNP-Gal), with retention of the anomeric configuration. Does not hydrolyze DNP-Glc or pNP-Glc. This chain is Retaining alpha-galactosidase, found in Bacteroides thetaiotaomicron (strain ATCC 29148 / DSM 2079 / JCM 5827 / CCUG 10774 / NCTC 10582 / VPI-5482 / E50).